Consider the following 337-residue polypeptide: Delta-aminolevulinic acid dehydratase (337 aa).

Lys205 functions as the Schiff-base intermediate with substrate in the catalytic mechanism. Residues Arg215 and Lys229 each contribute to the 5-aminolevulinate site. A Mg(2+)-binding site is contributed by Glu245. Lys260 functions as the Schiff-base intermediate with substrate in the catalytic mechanism. 5-aminolevulinate contacts are provided by Ser286 and Tyr324.

It belongs to the ALAD family. As to quaternary structure, homooctamer; formed by oligomerization of dimers. Requires Mg(2+) as cofactor.

The enzyme catalyses 2 5-aminolevulinate = porphobilinogen + 2 H2O + H(+). Its pathway is porphyrin-containing compound metabolism; protoporphyrin-IX biosynthesis; coproporphyrinogen-III from 5-aminolevulinate: step 1/4. With respect to regulation, stimulated by magnesium ions. Functionally, catalyzes an early step in the biosynthesis of tetrapyrroles. Binds two molecules of 5-aminolevulinate per subunit, each at a distinct site, and catalyzes their condensation to form porphobilinogen. The protein is Delta-aminolevulinic acid dehydratase (hemB) of Pseudomonas aeruginosa (strain ATCC 15692 / DSM 22644 / CIP 104116 / JCM 14847 / LMG 12228 / 1C / PRS 101 / PAO1).